We begin with the raw amino-acid sequence, 366 residues long: Cell division protein FtsZ 1 (366 aa).

Residues 45 to 49 (GAGCN), 132 to 134 (GTG), Glu-163, Arg-167, and Asp-210 each bind GTP. The segment covering 344–354 (PEEETPLETPE) has biased composition (acidic residues). The tract at residues 344–366 (PEEETPLETPEESPSIEISIPEL) is disordered. Positions 355-366 (ESPSIEISIPEL) are enriched in low complexity.

This sequence belongs to the FtsZ family. Homodimer. Polymerizes to form a dynamic ring structure in a strictly GTP-dependent manner. Interacts directly with several other division proteins.

Its subcellular location is the cytoplasm. Its function is as follows. Essential cell division protein that forms a contractile ring structure (Z ring) at the future cell division site. The regulation of the ring assembly controls the timing and the location of cell division. One of the functions of the FtsZ ring is to recruit other cell division proteins to the septum to produce a new cell wall between the dividing cells. Binds GTP and shows GTPase activity. In Pyrococcus woesei, this protein is Cell division protein FtsZ 1.